A 94-amino-acid chain; its full sequence is Large ribosomal subunit protein uL22 (94 aa).

It belongs to the universal ribosomal protein uL22 family. In terms of assembly, part of the 50S ribosomal subunit.

Its function is as follows. This protein binds specifically to 23S rRNA; its binding is stimulated by other ribosomal proteins, e.g. L4, L17, and L20. It is important during the early stages of 50S assembly. It makes multiple contacts with different domains of the 23S rRNA in the assembled 50S subunit and ribosome. In terms of biological role, the globular domain of the protein is located near the polypeptide exit tunnel on the outside of the subunit, while an extended beta-hairpin is found that lines the wall of the exit tunnel in the center of the 70S ribosome. The polypeptide is Large ribosomal subunit protein uL22 (rplV) (Tomato big bud phytoplasma).